The chain runs to 322 residues: Helix-loop-helix 34 (322 aa).

Over residues 1–11 (METNLSEEKQK) the composition is skewed to basic and acidic residues. Positions 1 to 23 (METNLSEEKQKPSKSQAQQRRQM) are disordered. Residues 8 to 62 (EKQKPSKSQAQQRRQMENYEFSQLANELPLARAISGQHIDKTTMVRLATAYIKLH) form the bHLH domain. 2 PAS domains span residues 82 to 152 (DSLW…DLNW) and 203 to 276 (PTPV…FNLG).

In terms of assembly, efficient DNA binding requires dimerization with another bHLH protein. Expressed in a small subset of neurons, probably AVJL and AVJR. Expressed in the AVH neurons.

The protein resides in the nucleus. Its function is as follows. Transcription factor. Involved in specifying AVH neuron identity, acting in concert with unc-42. Involved in serotonin-mediated feeding behavior, probably acting by modulating expression of genes involved in glutamate signaling. In Caenorhabditis elegans, this protein is Helix-loop-helix 34 (hlh-34).